A 173-amino-acid chain; its full sequence is Bifunctional protein PyrR (173 aa).

The short motif at 93-105 is the PRPP-binding element; sequence VILVDDVLYTGRT.

Belongs to the purine/pyrimidine phosphoribosyltransferase family. PyrR subfamily. Homodimer and homohexamer; in equilibrium.

The catalysed reaction is UMP + diphosphate = 5-phospho-alpha-D-ribose 1-diphosphate + uracil. Its function is as follows. Regulates transcriptional attenuation of the pyrimidine nucleotide (pyr) operon by binding in a uridine-dependent manner to specific sites on pyr mRNA. This disrupts an antiterminator hairpin in the RNA and favors formation of a downstream transcription terminator, leading to a reduced expression of downstream genes. Functionally, also displays a weak uracil phosphoribosyltransferase activity which is not physiologically significant. The protein is Bifunctional protein PyrR of Streptococcus suis (strain 05ZYH33).